The chain runs to 878 residues: Leucine--tRNA ligase (878 aa).

The 'HIGH' region signature appears at 43 to 54 (PYPSAQGLHVGH). Residues 634 to 638 (KMSKA) carry the 'KMSKS' region motif. Residue Lys637 participates in ATP binding.

The protein belongs to the class-I aminoacyl-tRNA synthetase family.

The protein localises to the cytoplasm. The catalysed reaction is tRNA(Leu) + L-leucine + ATP = L-leucyl-tRNA(Leu) + AMP + diphosphate. This Treponema pallidum subsp. pallidum (strain SS14) protein is Leucine--tRNA ligase.